We begin with the raw amino-acid sequence, 320 residues long: Endolytic peptidoglycan transglycosylase RlpA (320 aa).

The protein belongs to the RlpA family.

Functionally, lytic transglycosylase with a strong preference for naked glycan strands that lack stem peptides. The sequence is that of Endolytic peptidoglycan transglycosylase RlpA from Rickettsia typhi (strain ATCC VR-144 / Wilmington).